The primary structure comprises 321 residues: Glycerol-3-phosphate phosphatase (321 aa).

D34 (nucleophile) is an active-site residue. Mg(2+) contacts are provided by D34, D36, and D260. Catalysis depends on D36, which acts as the Proton donor.

Belongs to the HAD-like hydrolase superfamily. CbbY/CbbZ/Gph/YieH family. In terms of assembly, homodimer. It depends on Mg(2+) as a cofactor. Detected in all tissues including red cells, lymphocytes and cultured fibroblasts (at protein level). The highest activities occur in skeletal muscle and cardiac muscle.

It carries out the reaction O-phospho-L-tyrosyl-[protein] + H2O = L-tyrosyl-[protein] + phosphate. It catalyses the reaction sn-glycerol 1-phosphate + H2O = glycerol + phosphate. The enzyme catalyses sn-glycerol 3-phosphate + H2O = glycerol + phosphate. Glycerol-3-phosphate phosphatase hydrolyzing glycerol-3-phosphate into glycerol. Thereby, regulates the cellular levels of glycerol-3-phosphate a metabolic intermediate of glucose, lipid and energy metabolism. Was also shown to have a 2-phosphoglycolate phosphatase activity and a tyrosine-protein phosphatase activity. However, their physiological relevance is unclear. In vitro, also has a phosphatase activity toward ADP, ATP, GDP and GTP. The sequence is that of Glycerol-3-phosphate phosphatase from Homo sapiens (Human).